A 213-amino-acid chain; its full sequence is Thymidylate kinase (213 aa).

9 to 16 contributes to the ATP binding site; the sequence is GVEGCGKT.

It belongs to the thymidylate kinase family.

It catalyses the reaction dTMP + ATP = dTDP + ADP. Phosphorylation of dTMP to form dTDP in both de novo and salvage pathways of dTTP synthesis. This Geotalea uraniireducens (strain Rf4) (Geobacter uraniireducens) protein is Thymidylate kinase.